The chain runs to 165 residues: Large ribosomal subunit protein uL10 (165 aa).

This sequence belongs to the universal ribosomal protein uL10 family. As to quaternary structure, part of the ribosomal stalk of the 50S ribosomal subunit. The N-terminus interacts with L11 and the large rRNA to form the base of the stalk. The C-terminus forms an elongated spine to which L12 dimers bind in a sequential fashion forming a multimeric L10(L12)X complex.

Its function is as follows. Forms part of the ribosomal stalk, playing a central role in the interaction of the ribosome with GTP-bound translation factors. This Burkholderia cenocepacia (strain HI2424) protein is Large ribosomal subunit protein uL10.